A 366-amino-acid polypeptide reads, in one-letter code: Terpene cyclase atmA (366 aa).

8 consecutive transmembrane segments (helical) span residues 9–29 (FLLL…NNGF), 84–104 (LTGL…VVHI), 113–133 (GMVI…GIVI), 162–182 (GLVV…SLPA), 195–215 (IAAW…HHLF), 233–253 (VYHF…SAFV), 291–311 (AGLF…TMVW), and 333–353 (ILRL…VRLI).

The protein belongs to the membrane-bound ascI terpene cyclase family.

The protein resides in the membrane. Its function is as follows. Aflatrem synthesis protein A; part of the ATM2 gene cluster that mediates the biosynthesis of aflatrem, a tremorgenic mycotoxin with acute neurotoxic effects. Synthesis of geranylgeranyl diphosphate (GGPP) by AtmG (a GGPP synthase) precedes condensation of GGPP with indole 3-glycerol phosphate, followed by epoxidation and cyclization by AtmM (a FAD-dependent monooxygenase) and AtmC (a prenyltransferase) to produce paspaline. AtmB is also essential for paspaline production, but its exact role has not been identified yet. AtmP, a cytochrome P450 monooxygenase, subsequently converts paspaline to 13-desoxypaxilline via PC-M6 by removal of the C-30 methyl group and oxidation at C-10. AtmQ, a cytochrome P450 monooxygenase, then catalyzes the oxidation of 13-desoxypaxilline, first at C-7 to produce paspalicine and then at C-13 to form paspalinine. Finally, AtmD prenylates paspalinine to form aflatrem. The role of atmA in the aflatrem biosynthesis is still unknown. The sequence is that of Terpene cyclase atmA from Aspergillus flavus.